The chain runs to 407 residues: uncharacterized protein (407 aa).

Helical transmembrane passes span 13–30 (IVFT…SPFL), 40–62 (VTPL…YYVL), 67–89 (ILGM…YNII), 118–140 (LAFA…VFSG), 147–169 (VYER…IRRL), 179–199 (AVGL…YYNY), 253–271 (WISG…SVFV), 281–303 (TEII…FGPL), 334–356 (GYLI…EIIA), 361–378 (AFAF…LVSF), and 385–402 (QFLV…IVLF).

It is found in the cell membrane. This is an uncharacterized protein from Aquifex aeolicus (strain VF5).